We begin with the raw amino-acid sequence, 476 residues long: Ribulose bisphosphate carboxylase large chain (476 aa).

The propeptide occupies 1–2 (MS). N-acetylproline is present on P3. K14 is subject to N6,N6,N6-trimethyllysine. N123 and T173 together coordinate substrate. K175 serves as the catalytic Proton acceptor. K177 contacts substrate. Mg(2+) contacts are provided by K201, D203, and E204. Residue K201 is modified to N6-carboxylysine. Residue H294 is the Proton acceptor of the active site. R295, H327, and S379 together coordinate substrate.

The protein belongs to the RuBisCO large chain family. Type I subfamily. Heterohexadecamer of 8 large chains and 8 small chains; disulfide-linked. The disulfide link is formed within the large subunit homodimers. Requires Mg(2+) as cofactor. In terms of processing, the disulfide bond which can form in the large chain dimeric partners within the hexadecamer appears to be associated with oxidative stress and protein turnover.

It localises to the plastid. The protein localises to the chloroplast. The enzyme catalyses 2 (2R)-3-phosphoglycerate + 2 H(+) = D-ribulose 1,5-bisphosphate + CO2 + H2O. It carries out the reaction D-ribulose 1,5-bisphosphate + O2 = 2-phosphoglycolate + (2R)-3-phosphoglycerate + 2 H(+). Its function is as follows. RuBisCO catalyzes two reactions: the carboxylation of D-ribulose 1,5-bisphosphate, the primary event in carbon dioxide fixation, as well as the oxidative fragmentation of the pentose substrate in the photorespiration process. Both reactions occur simultaneously and in competition at the same active site. In Liriodendron tulipifera (Tuliptree), this protein is Ribulose bisphosphate carboxylase large chain.